The following is a 1006-amino-acid chain: E3 ubiquitin-protein ligase MIB1 (1006 aa).

The MIB/HERC2 1 domain occupies 6–74 (NNRVMVEGVG…AYDLRILDSA (69 aa)). A ZZ-type zinc finger spans residues 80-132 (HDGTMCDTCRQQPIIGIRWKCAECTNYDLCTVCYHGDKHHLRHRFYRITTPGS). Zn(2+) is bound by residues cysteine 85, cysteine 88, cysteine 100, cysteine 103, cysteine 109, cysteine 112, histidine 118, and histidine 122. Residues 143 to 221 (SKKITARGIF…MSDLKCVQDA (79 aa)) enclose the MIB/HERC2 2 domain. Serine 408 is modified (phosphoserine). 9 ANK repeats span residues 430–460 (DLNEELVKAAANGDVAKVEDLLKRPDVDVNG), 463–492 (AGHTAMQAASQNGHVDILKLLLKQNVDVEA), 496–525 (DGDRAVHHAAFGDEGAVIEVLHRGSADLNA), 529–558 (RRQTPLHIAVNKGHLQVVKTLLDFGCHPSL), 562–591 (EGDTPLHDAISKKRDDILAVLLEAGADVTI), 595–627 (NGFNALHHAALRGNPSAMRVLLSKLPRPWIVDE), 631–661 (DGYTALHLAALNNHVEVAELLVHQGNANLDI), 665–694 (NQQTALHLAVERQHTQIVRLLVRAGAKLDI), and 698–729 (DGDTPLHEALRHHTLSQLRQLQDMQDVGKVDA). 2 consecutive RING-type zinc fingers follow at residues 819–854 (CMVCSDMKRDTLFGPCGHIATCSLCSPRVKKCLICK) and 866–901 (CVVCSDKKAAVLFQPCGHMCACENCASLMKKCVQCR). Residues 935–962 (QKDKDNTNVNADVQKLQQQLQDIKEQTM) are a coiled coil. An RING-type 3 zinc finger spans residues 963-996 (CPVCLDRLKNMIFLCGHGTCQLCGDRMSECPICR).

As to quaternary structure, interacts with CEP131 and PCM1. Ubiquitinated; this modification is inhibited in response to cellular stress, such as ultraviolet light (UV) radiation or heat shock. Ubiquitinated; possibly via autoubiquitination. As to expression, detected in all tissues tested. Present in embryo, embryonic stem cells, bladder, skeletal muscle, bladder, uterus, testis, stomach, colon, ileum, trachea, lung, aorta, kidney, spleen, liver and vas deferens (at protein level). Highly expressed in testis.

The protein localises to the cytoplasm. It is found in the cytoskeleton. Its subcellular location is the microtubule organizing center. The protein resides in the centrosome. It localises to the centriolar satellite. The protein localises to the cell membrane. It carries out the reaction S-ubiquitinyl-[E2 ubiquitin-conjugating enzyme]-L-cysteine + [acceptor protein]-L-lysine = [E2 ubiquitin-conjugating enzyme]-L-cysteine + N(6)-ubiquitinyl-[acceptor protein]-L-lysine.. Its pathway is protein modification; protein ubiquitination. In terms of biological role, E3 ubiquitin-protein ligase that mediates ubiquitination of Delta receptors, which act as ligands of Notch proteins. Positively regulates the Delta-mediated Notch signaling by ubiquitinating the intracellular domain of Delta, leading to endocytosis of Delta receptors. Involved in ubiquitination of centriolar satellite CEP131, CEP290 and PCM1 proteins and hence inhibits primary cilium formation in proliferating cells. Mediates 'Lys-63'-linked polyubiquitination of TBK1, which probably participates in kinase activation. Probably mediates ubiquitination and subsequent proteasomal degradation of DAPK1, thereby antagonizing anti-apoptotic effects of DAPK1 to promote TNF-induced apoptosis. The chain is E3 ubiquitin-protein ligase MIB1 (Mib1) from Mus musculus (Mouse).